Reading from the N-terminus, the 187-residue chain is Large ribosomal subunit protein uL22 (187 aa).

The protein belongs to the universal ribosomal protein uL22 family.

The protein is Large ribosomal subunit protein uL22 (RPL17) of Theileria parva (East coast fever infection agent).